We begin with the raw amino-acid sequence, 182 residues long: Adenine phosphoribosyltransferase (182 aa).

Belongs to the purine/pyrimidine phosphoribosyltransferase family. In terms of assembly, homodimer.

It localises to the cytoplasm. The enzyme catalyses AMP + diphosphate = 5-phospho-alpha-D-ribose 1-diphosphate + adenine. The protein operates within purine metabolism; AMP biosynthesis via salvage pathway; AMP from adenine: step 1/1. Its function is as follows. Catalyzes a salvage reaction resulting in the formation of AMP, that is energically less costly than de novo synthesis. In Renibacterium salmoninarum (strain ATCC 33209 / DSM 20767 / JCM 11484 / NBRC 15589 / NCIMB 2235), this protein is Adenine phosphoribosyltransferase.